The sequence spans 637 residues: Chaperone protein DnaK (637 aa).

Residue Thr198 is modified to Phosphothreonine; by autocatalysis. The tract at residues 597–637 (MYQQAAQESGQTEGAAQDPKGAAQDDDVVDADFEEVKDHKK) is disordered. Over residues 600-610 (QAAQESGQTEG) the composition is skewed to polar residues. Over residues 620–629 (QDDDVVDADF) the composition is skewed to acidic residues.

This sequence belongs to the heat shock protein 70 family.

Its function is as follows. Acts as a chaperone. The protein is Chaperone protein DnaK of Desulforapulum autotrophicum (strain ATCC 43914 / DSM 3382 / VKM B-1955 / HRM2) (Desulfobacterium autotrophicum).